We begin with the raw amino-acid sequence, 292 residues long: RWD domain-containing protein 2A (292 aa).

Positions L14–Y134 constitute an RWD domain.

The chain is RWD domain-containing protein 2A (RWDD2A) from Homo sapiens (Human).